The chain runs to 390 residues: Outer membrane protein assembly factor BamB (390 aa).

Residues 1–25 (MPVLRDRIPRRGFFLGLALLAALSG) form the signal peptide. Residue Cys26 is the site of N-palmitoyl cysteine attachment. The S-diacylglycerol cysteine moiety is linked to residue Cys26.

Belongs to the BamB family. Part of the Bam complex.

It localises to the cell outer membrane. Its function is as follows. Part of the outer membrane protein assembly complex, which is involved in assembly and insertion of beta-barrel proteins into the outer membrane. The sequence is that of Outer membrane protein assembly factor BamB from Marinobacter adhaerens (strain DSM 23420 / HP15).